Reading from the N-terminus, the 207-residue chain is Outer-membrane lipoprotein LolB (207 aa).

The first 21 residues, 1–21 (MPLPDFRLIRLLPLAALVLTA), serve as a signal peptide directing secretion. Cysteine 22 carries N-palmitoyl cysteine lipidation. Cysteine 22 carries S-diacylglycerol cysteine lipidation.

This sequence belongs to the LolB family. As to quaternary structure, monomer.

The protein localises to the cell outer membrane. In terms of biological role, plays a critical role in the incorporation of lipoproteins in the outer membrane after they are released by the LolA protein. This chain is Outer-membrane lipoprotein LolB, found in Escherichia coli O127:H6 (strain E2348/69 / EPEC).